The chain runs to 83 residues: Small ribosomal subunit protein bS16 (83 aa).

This sequence belongs to the bacterial ribosomal protein bS16 family.

This chain is Small ribosomal subunit protein bS16, found in Borrelia hermsii (strain HS1 / DAH).